The sequence spans 1295 residues: Phosphoribosylformylglycinamidine synthase (1295 aa).

Residues 305 to 316 (GAATGSGGEIRD), 384 to 386 (TGY), and alanine 676 each bind ATP. Mg(2+) contacts are provided by aspartate 677, glutamate 716, asparagine 720, and aspartate 884. Residue serine 886 participates in ATP binding. In terms of domain architecture, Glutamine amidotransferase type-1 spans 1042–1295 (VAILREQGVN…MFRNARKHLG (254 aa)). The active-site Nucleophile is the cysteine 1135. Active-site residues include histidine 1260 and glutamate 1262.

The protein in the N-terminal section; belongs to the FGAMS family. As to quaternary structure, monomer.

The protein resides in the cytoplasm. It catalyses the reaction N(2)-formyl-N(1)-(5-phospho-beta-D-ribosyl)glycinamide + L-glutamine + ATP + H2O = 2-formamido-N(1)-(5-O-phospho-beta-D-ribosyl)acetamidine + L-glutamate + ADP + phosphate + H(+). The protein operates within purine metabolism; IMP biosynthesis via de novo pathway; 5-amino-1-(5-phospho-D-ribosyl)imidazole from N(2)-formyl-N(1)-(5-phospho-D-ribosyl)glycinamide: step 1/2. Functionally, phosphoribosylformylglycinamidine synthase involved in the purines biosynthetic pathway. Catalyzes the ATP-dependent conversion of formylglycinamide ribonucleotide (FGAR) and glutamine to yield formylglycinamidine ribonucleotide (FGAM) and glutamate. This Idiomarina loihiensis (strain ATCC BAA-735 / DSM 15497 / L2-TR) protein is Phosphoribosylformylglycinamidine synthase.